Consider the following 483-residue polypeptide: MFS-type transporter ppzB (483 aa).

5 helical membrane-spanning segments follow: residues 18–38 (FILTTVAMGLFTDLVLYGILL), 62–82 (AFLATYAGASVFFSVPAGWAA), 96–116 (MFLVVATAIFAFSTSLVLLVV), 149–169 (IGTIFATISVGELAAPVLGGV), and 178–198 (AVFAVSAVLLAIDLALRALVI). An N-linked (GlcNAc...) asparagine glycan is attached at N219. A run of 6 helical transmembrane segments spans residues 281–301 (LAMLLSFVQALFIGTFDATVP), 310–330 (FSSLQVGLVFIALMLPYFALG), 344–364 (AAATSGYAFLVPCLMLLGLPE), 374–394 (VALFCTILALNGIGLAVVTSP), 424–444 (FGFSSLYFFTGLAVGPLLGGF), and 453–473 (VMGAVYAAISGVTAIVSFLFV).

The protein belongs to the major facilitator superfamily. TCR/Tet family.

The protein resides in the membrane. In terms of biological role, MFS-type transporter; part of the gene cluster that mediates the biosynthesis of pyrrolopyrazines, secondary metabolites showing insecticidal activity. Probably involved in the secretion of peramine and other pyrrolopyrazines. In Metarhizium rileyi (strain RCEF 4871) (Nomuraea rileyi), this protein is MFS-type transporter ppzB.